The following is a 1047-amino-acid chain: FACT complex subunit SPT16 (1047 aa).

Ala-2 is modified (N-acetylalanine). Lys-139 is modified (N6-acetyllysine). Ser-188 is subject to Phosphoserine. N6-acetyllysine is present on residues Lys-196 and Lys-223. The residue at position 455 (Ser-455) is a Phosphoserine. A coiled-coil region spans residues 465 to 507; it reads RNEMTAEEKRRAHQKELAAQLNEEAKRRLTEQKGEQQIQKARK. Residues 491–518 form a disordered region; it reads RRLTEQKGEQQIQKARKSNVSYKNPSLM. Lys-497 is covalently cross-linked (Glycyl lysine isopeptide (Lys-Gly) (interchain with G-Cter in SUMO2)). Over residues 499–514 the composition is skewed to polar residues; it reads EQQIQKARKSNVSYKN. Position 508 is a phosphoserine (Ser-508). N6-acetyllysine; alternate is present on Lys-513. Lys-513 participates in a covalent cross-link: Glycyl lysine isopeptide (Lys-Gly) (interchain with G-Cter in SUMO2); alternate. A Glycyl lysine isopeptide (Lys-Gly) (interchain with G-Cter in SUMO2) cross-link involves residue Lys-647. Phosphoserine is present on residues Ser-650 and Ser-658. Residues Lys-732 and Lys-786 each carry the N6-acetyllysine modification. Thr-903 carries the post-translational modification Phosphothreonine. At Lys-904 the chain carries N6-acetyllysine. The tract at residues 918–1047 is disordered; sequence EQGGWSFLEP…SSAPPKKKRK (130 aa). Over residues 927-973 the composition is skewed to acidic residues; that stretch reads PEGEGSDAEDGDSESEIEDETFNPSEDDYEEEEEDSDEDYSSEAEES. Residues Ser-979, Ser-982, Ser-986, and Ser-1015 each carry the phosphoserine modification. Residues 985-1005 are compositionally biased toward basic and acidic residues; it reads ESGKDWDELEEEARKADRESR. The segment covering 1024–1039 has biased composition (low complexity); it reads VHSSGRGSNRGSRHSS.

Belongs to the peptidase M24 family. SPT16 subfamily. Interacts with MYOG (via C-terminal region). Component of the FACT complex, a stable heterodimer of SSRP1 and SUPT16H. Also a component of a CK2-SPT16-SSRP1 complex which forms following UV irradiation, composed of SSRP1, SUPT16H, CSNK2A1, CSNK2A2 and CSNK2B. Interacts with NEK9. Binds to histone H2A-H2B. Identified in a centromere complex containing histones H2A, H2B and H4, and at least CENPA, CENPB, CENPC, CENPT, CENPN, HJURP, SUPT16H, SSRP1 and RSF1. Interacts with GTF2E2. ADP-ribosylated. ADP-ribosylation by PARP1 is induced by genotoxic stress and correlates with dissociation of FACT from chromatin. In terms of tissue distribution, widely expressed. Expressed in brain, liver, heart, kidneys, lungs, spleen, thymus, ovary, and testes, with highest levels of expression observed in thymus.

Its subcellular location is the nucleus. It localises to the chromosome. In terms of biological role, component of the FACT complex, a general chromatin factor that acts to reorganize nucleosomes. The FACT complex is involved in multiple processes that require DNA as a template such as mRNA elongation, DNA replication and DNA repair. During transcription elongation the FACT complex acts as a histone chaperone that both destabilizes and restores nucleosomal structure. It facilitates the passage of RNA polymerase II and transcription by promoting the dissociation of one histone H2A-H2B dimer from the nucleosome, then subsequently promotes the reestablishment of the nucleosome following the passage of RNA polymerase II. The FACT complex is probably also involved in phosphorylation of 'Ser-392' of p53/TP53 via its association with CK2 (casein kinase II). This Mus musculus (Mouse) protein is FACT complex subunit SPT16 (Supt16h).